A 416-amino-acid polypeptide reads, in one-letter code: 4-hydroxy-3-methylbut-2-en-1-yl diphosphate synthase (flavodoxin) (416 aa).

Residues Cys304, Cys307, Cys350, and Glu357 each coordinate [4Fe-4S] cluster.

Belongs to the IspG family. The cofactor is [4Fe-4S] cluster.

It carries out the reaction (2E)-4-hydroxy-3-methylbut-2-enyl diphosphate + oxidized [flavodoxin] + H2O + 2 H(+) = 2-C-methyl-D-erythritol 2,4-cyclic diphosphate + reduced [flavodoxin]. It participates in isoprenoid biosynthesis; isopentenyl diphosphate biosynthesis via DXP pathway; isopentenyl diphosphate from 1-deoxy-D-xylulose 5-phosphate: step 5/6. Functionally, converts 2C-methyl-D-erythritol 2,4-cyclodiphosphate (ME-2,4cPP) into 1-hydroxy-2-methyl-2-(E)-butenyl 4-diphosphate. This Allorhizobium ampelinum (strain ATCC BAA-846 / DSM 112012 / S4) (Agrobacterium vitis (strain S4)) protein is 4-hydroxy-3-methylbut-2-en-1-yl diphosphate synthase (flavodoxin).